The chain runs to 1807 residues: Vitellogenin-2 (1807 aa).

A signal peptide spans 1-16 (MWFPVTLLFLAGVAVA). The 796-residue stretch at 24–819 (WETGNEYQYS…LIPKYVYVGV (796 aa)) folds into the Vitellogenin domain. Residues Cys180 and Cys224 are joined by a disulfide bond. Positions 334–402 (SDSDNRRVRH…SSSSSSEEEN (69 aa)) are disordered. A compositionally biased stretch (low complexity) spans 346-397 (VSQNSEQENSSESSKSSSQSSSSSSSASSSSSSSSSSSSSSSSSSSSSSSSS). Residues Asn354, Asn579, Asn635, Asn1181, Asn1304, Asn1373, and Asn1506 are each glycosylated (N-linked (GlcNAc...) asparagine). One can recognise a VWFD domain in the interval 1448–1636 (QSCTLDKDKV…TYAMTQENCQ (189 aa)). 2 cysteine pairs are disulfide-bonded: Cys1450/Cys1599 and Cys1472/Cys1635. Disordered stretches follow at residues 1635-1655 (CQGPAPENKRRAEQSTCHEFP) and 1684-1723 (NRNKEHGRGNKSHQNNKKQYQANSQESGSSESRNDKKKHN). Residue Asn1693 is glycosylated (N-linked (GlcNAc...) asparagine). Over residues 1700–1714 (KKQYQANSQESGSSE) the composition is skewed to polar residues.

Its subcellular location is the secreted. In terms of biological role, precursor of the egg-yolk proteins that are sources of nutrients during embryonic development. This Solenopsis invicta (Red imported fire ant) protein is Vitellogenin-2.